A 344-amino-acid chain; its full sequence is Dihydroorotate dehydrogenase (quinone) (344 aa).

FMN contacts are provided by residues 65–69 (AGFDK) and threonine 89. Lysine 69 provides a ligand contact to substrate. 114-118 (NRMGF) serves as a coordination point for substrate. The FMN site is built by asparagine 145 and asparagine 178. Position 178 (asparagine 178) interacts with substrate. The active-site Nucleophile is serine 181. Asparagine 183 contributes to the substrate binding site. Residues lysine 215 and threonine 243 each contribute to the FMN site. Residue 244-245 (NT) participates in substrate binding. FMN is bound by residues glycine 269, glycine 298, and 319–320 (YT).

This sequence belongs to the dihydroorotate dehydrogenase family. Type 2 subfamily. As to quaternary structure, monomer. It depends on FMN as a cofactor.

The protein localises to the cell membrane. The enzyme catalyses (S)-dihydroorotate + a quinone = orotate + a quinol. The protein operates within pyrimidine metabolism; UMP biosynthesis via de novo pathway; orotate from (S)-dihydroorotate (quinone route): step 1/1. Functionally, catalyzes the conversion of dihydroorotate to orotate with quinone as electron acceptor. This chain is Dihydroorotate dehydrogenase (quinone), found in Clavibacter sepedonicus (Clavibacter michiganensis subsp. sepedonicus).